Here is a 431-residue protein sequence, read N- to C-terminus: Serine hydroxymethyltransferase (431 aa).

(6S)-5,6,7,8-tetrahydrofolate-binding positions include Leu-128 and 132–134 (GHL). Lys-237 carries the post-translational modification N6-(pyridoxal phosphate)lysine.

Belongs to the SHMT family. Homodimer. Requires pyridoxal 5'-phosphate as cofactor.

Its subcellular location is the cytoplasm. The enzyme catalyses (6R)-5,10-methylene-5,6,7,8-tetrahydrofolate + glycine + H2O = (6S)-5,6,7,8-tetrahydrofolate + L-serine. Its pathway is one-carbon metabolism; tetrahydrofolate interconversion. It participates in amino-acid biosynthesis; glycine biosynthesis; glycine from L-serine: step 1/1. Its function is as follows. Catalyzes the reversible interconversion of serine and glycine with tetrahydrofolate (THF) serving as the one-carbon carrier. This reaction serves as the major source of one-carbon groups required for the biosynthesis of purines, thymidylate, methionine, and other important biomolecules. Also exhibits THF-independent aldolase activity toward beta-hydroxyamino acids, producing glycine and aldehydes, via a retro-aldol mechanism. The protein is Serine hydroxymethyltransferase of Ruegeria pomeroyi (strain ATCC 700808 / DSM 15171 / DSS-3) (Silicibacter pomeroyi).